The sequence spans 530 residues: Copine-B (530 aa).

2 consecutive C2 domains span residues 1 to 125 (MTTP…SEIK) and 130 to 253 (ETGV…PLIN). Ca(2+)-binding residues include aspartate 25, aspartate 31, aspartate 85, aspartate 87, and aspartate 100. The 220-residue stretch at 294 to 513 (NLMVAIDCTA…ETLREIPQQL (220 aa)) folds into the VWFA domain.

This sequence belongs to the copine family. Ca(2+) serves as cofactor.

The sequence is that of Copine-B (cpnB-1) from Dictyostelium discoideum (Social amoeba).